Here is a 288-residue protein sequence, read N- to C-terminus: Cell division protein ZipA (288 aa).

Residue M1 is a topological domain, periplasmic. Residues 2-22 form a helical membrane-spanning segment; the sequence is EIGLREWLIVIGIIVIAGILF. Residues 23–288 lie on the Cytoplasmic side of the membrane; it reads DGWRRMRGGK…ERRALTQRRG (266 aa). Positions 48–138 are disordered; that stretch reads DEEETTSAEV…DDKPAQRITE (91 aa). Basic and acidic residues-rich tracts occupy residues 64–77, 85–105, and 122–138; these read LDTH…EHDL, RDNK…KDEP, and ARDD…RITE.

Belongs to the ZipA family. Interacts with FtsZ via their C-terminal domains.

Its subcellular location is the cell inner membrane. Essential cell division protein that stabilizes the FtsZ protofilaments by cross-linking them and that serves as a cytoplasmic membrane anchor for the Z ring. Also required for the recruitment to the septal ring of downstream cell division proteins. In Pseudomonas syringae pv. tomato (strain ATCC BAA-871 / DC3000), this protein is Cell division protein ZipA.